We begin with the raw amino-acid sequence, 340 residues long: Undecaprenyl-phosphate 4-deoxy-4-formamido-L-arabinose transferase (340 aa).

2 helical membrane-spanning segments follow: residues 235-255 (LSIV…ALIF) and 269-289 (LFVL…GMGL).

This sequence belongs to the glycosyltransferase 2 family.

The protein localises to the cell inner membrane. It catalyses the reaction UDP-4-deoxy-4-formamido-beta-L-arabinose + di-trans,octa-cis-undecaprenyl phosphate = 4-deoxy-4-formamido-alpha-L-arabinopyranosyl di-trans,octa-cis-undecaprenyl phosphate + UDP. It functions in the pathway glycolipid biosynthesis; 4-amino-4-deoxy-alpha-L-arabinose undecaprenyl phosphate biosynthesis; 4-amino-4-deoxy-alpha-L-arabinose undecaprenyl phosphate from UDP-4-deoxy-4-formamido-beta-L-arabinose and undecaprenyl phosphate: step 1/2. Its pathway is bacterial outer membrane biogenesis; lipopolysaccharide biosynthesis. Its function is as follows. Catalyzes the transfer of 4-deoxy-4-formamido-L-arabinose from UDP to undecaprenyl phosphate. The modified arabinose is attached to lipid A and is required for resistance to polymyxin and cationic antimicrobial peptides. The polypeptide is Undecaprenyl-phosphate 4-deoxy-4-formamido-L-arabinose transferase (Pseudomonas fluorescens (strain Pf0-1)).